We begin with the raw amino-acid sequence, 347 residues long: MRIEEDLKLGFKDVLIRPKRSTLKSRSDVELERQFTFKHSGQSWSGVPIIAANMDTVGTFSMASALASFDILTAVHKHFSVEEWQAFINNSSADVLKHVMVSTGTSDADFEKTKQILDLNPALNFVCIDVANGYSEHFVQFVAKAREAWPTKTICAGNVVTGEMCEELILSGADIVKVGIGPGSVCTTRVKTGVGYPQLSAVIECADAAHGLGGMIVSDGGCTTPGDVAKAFGGGADFVMLGGMLAGHEESGGRIVEENGEKFMLFYGMSSESAMKRHVGGVAEYRAAEGKTVKLPLRGPVENTARDILGGLRSACTYVGASRLKELTKRTTFIRVLEQENRIFNNL.

108–131 (ADFEKTKQILDLNPALNFVCIDVA) lines the NADP(+) pocket. Positions 181 and 183 each coordinate K(+). The Thioimidate intermediate role is filled by cysteine 186. Position 216-239 (216-239 (IVSDGGCTTPGDVAKAFGGGADFV)) interacts with NADP(+).

The protein belongs to the IMPDH/GMPR family. GuaC type 1 subfamily. Homotetramer.

It carries out the reaction IMP + NH4(+) + NADP(+) = GMP + NADPH + 2 H(+). Catalyzes the irreversible NADPH-dependent deamination of GMP to IMP. It functions in the conversion of nucleobase, nucleoside and nucleotide derivatives of G to A nucleotides, and in maintaining the intracellular balance of A and G nucleotides. The chain is GMP reductase from Shigella flexneri serotype 5b (strain 8401).